A 346-amino-acid chain; its full sequence is MAMVSEFLKQACYIEKQEQEYVQAVKSYKGGPGSAVSPYPSFNPSSDVAALHKAIMVKGVDEATIIDILTKRTNAQRQQIKAAYLQETGKPLDETLKKALTGHLEEVVLAMLKTPAQFDADELRAAMKGLGTDEDTLIEILTTRSNQQIREITRVYREELKRDLAKDITSDTSGDFRNALLALAKGDRCEDMSVNQDLADTDARALYEAGERRKGTDVNVFNTILTTRSYPHLRKVFQNYRKYSQHDMNKALDLELKGDIEKCLTTIVKCATSTPAFFAEKLYEAMKGAGTRHKTLIRIMVSRSEIDMNEIKVFYQKKYGIPLCQAILDETKGDYEKILVALCGGN.

Residue alanine 2 is modified to N-acetylalanine. Serine 5 carries the post-translational modification Phosphoserine; by TRPM7. Residue glutamine 19 forms an Isoglutamyl lysine isopeptide (Gln-Lys) (interchain with K-?) linkage. Tyrosine 21 is modified (phosphotyrosine; by EGFR). Position 27 is a phosphoserine; by PKC (serine 27). 2 positions are modified to phosphoserine: serine 34 and serine 37. 4 Annexin repeats span residues 42-113, 114-185, 197-269, and 273-344; these read FNPS…AMLK, TPAQ…ALAK, DLAD…TIVK, and STPA…ALCG. An N6-acetyllysine modification is found at lysine 58. 11 residues coordinate Ca(2+): glycine 59, valine 60, glutamate 62, lysine 97, leucine 100, glutamate 105, methionine 127, glycine 129, glycine 131, threonine 132, and glutamate 134. Threonine 136 carries the phosphothreonine modification. Residues aspartate 171, glycine 210, and arginine 213 each coordinate Ca(2+). Lysine 214 is covalently cross-linked (Glycyl lysine isopeptide (Lys-Gly) (interchain with G-Cter in SUMO1); alternate). Lysine 214 is covalently cross-linked (Glycyl lysine isopeptide (Lys-Gly) (interchain with G-Cter in SUMO2); alternate). Ca(2+) contacts are provided by glycine 215, aspartate 253, glutamate 255, and leucine 256. Residue lysine 257 forms a Glycyl lysine isopeptide (Lys-Gly) (interchain with G-Cter in SUMO1) linkage. Ca(2+) is bound by residues glutamate 261, methionine 286, glycine 288, and glycine 290. An N6-acetyllysine modification is found at lysine 312. Cysteine 324 and cysteine 343 are disulfide-bonded. Residues leucine 328, glutamate 330, and threonine 331 each coordinate Ca(2+). Residue lysine 332 forms a Glycyl lysine isopeptide (Lys-Gly) (interchain with G-Cter in SUMO1) linkage. Residue glutamate 336 coordinates Ca(2+).

The protein belongs to the annexin family. In terms of assembly, homodimer; non-covalently linked. Homodimer; linked by transglutamylation. Homodimers linked by transglutamylation are observed in placenta, but not in other tissues. Interacts with S100A11. Heterotetramer, formed by two molecules each of S100A11 and ANXA1. Interacts with DYSF. Interacts with EGFR. Phosphorylated by protein kinase C, EGFR and TRPM7. Phosphorylated in response to EGF treatment. Post-translationally, sumoylated. In terms of processing, proteolytically cleaved by cathepsin CTSG to release the active N-terminal peptide Ac2-26. As to expression, detected in eosinophils. Detected in lung, placenta, spleen and thymus (at protein level).

The protein localises to the nucleus. The protein resides in the cytoplasm. Its subcellular location is the cell projection. It is found in the cilium. It localises to the basolateral cell membrane. The protein localises to the lateral cell membrane. The protein resides in the cell membrane. Its subcellular location is the apical cell membrane. It is found in the membrane. It localises to the endosome membrane. The protein localises to the secreted. The protein resides in the extracellular space. Its subcellular location is the early endosome. It is found in the cytoplasmic vesicle membrane. It localises to the extracellular exosome. The protein localises to the cytoplasmic vesicle. The protein resides in the secretory vesicle lumen. Its subcellular location is the phagocytic cup. Functionally, plays important roles in the innate immune response as effector of glucocorticoid-mediated responses and regulator of the inflammatory process. Has anti-inflammatory activity. Plays a role in glucocorticoid-mediated down-regulation of the early phase of the inflammatory response. Contributes to the adaptive immune response by enhancing signaling cascades that are triggered by T-cell activation, regulates differentiation and proliferation of activated T-cells. Promotes the differentiation of T-cells into Th1 cells and negatively regulates differentiation into Th2 cells. Has no effect on unstimulated T-cells. Negatively regulates hormone exocytosis via activation of the formyl peptide receptors and reorganization of the actin cytoskeleton. Has high affinity for Ca(2+) and can bind up to eight Ca(2+) ions. Displays Ca(2+)-dependent binding to phospholipid membranes. Plays a role in the formation of phagocytic cups and phagosomes. Plays a role in phagocytosis by mediating the Ca(2+)-dependent interaction between phagosomes and the actin cytoskeleton. Functions at least in part by activating the formyl peptide receptors and downstream signaling cascades. Promotes chemotaxis of granulocytes and monocytes via activation of the formyl peptide receptors. Promotes rearrangement of the actin cytoskeleton, cell polarization and cell migration. Promotes resolution of inflammation and wound healing. Acts via neutrophil N-formyl peptide receptors to enhance the release of CXCL2. This chain is Annexin A1 (Anxa1), found in Rattus norvegicus (Rat).